Consider the following 453-residue polypeptide: MSPQTETKAGVGFKAGVNEYKLTYYTPEYETKDTDILAAFRVTPQPGVPPEERGEAVAAESSTGTWTTVWTDGLTSLDRYKGRCYHIEPVPGEEDQFIAYVAYPLDLFEEGSVTNMFTSIVGNVFGFKALRALRLEDLRIPVAYVKTFQGPPHGIQVERDKLNKYGRPLLGCTIKPKLGLSAKNYGRAVYECLRGGLDFTKDDENVNSQPFMRWRDRFLFCAEAIYKSQAETGEIKGHYLNATAGTCEDMMKRAVFARELGVPIVMHDYLTGGFTANTTLAHYCRDNGLLLHIHRAMHAVIDRQKNHGMHFRVLAKALRMSGGDHIHAGTVVGKLEGERDITLGFVDLLRDDYIEKDRSRGIYFTQDWVSLPGVIPVASRGIHVWHMPALTEIFGDDSVLQFGGGTLGHPWGNAPGAVANRVALEACVKARNEGRDLAAEGGEIIREACKWSP.

Positions 1-2 (MS) are excised as a propeptide. An N-acetylproline modification is found at Pro-3. Lys-14 bears the N6,N6,N6-trimethyllysine mark. Asn-123 and Thr-173 together coordinate substrate. The Proton acceptor role is filled by Lys-175. Residue Lys-177 coordinates substrate. Mg(2+) is bound by residues Lys-201, Asp-203, and Glu-204. Position 201 is an N6-carboxylysine (Lys-201). Catalysis depends on His-294, which acts as the Proton acceptor. Substrate contacts are provided by Arg-295, His-327, and Ser-379.

This sequence belongs to the RuBisCO large chain family. Type I subfamily. As to quaternary structure, heterohexadecamer of 8 large chains and 8 small chains; disulfide-linked. The disulfide link is formed within the large subunit homodimers. The cofactor is Mg(2+). In terms of processing, the disulfide bond which can form in the large chain dimeric partners within the hexadecamer appears to be associated with oxidative stress and protein turnover.

Its subcellular location is the plastid. It localises to the chloroplast. The catalysed reaction is 2 (2R)-3-phosphoglycerate + 2 H(+) = D-ribulose 1,5-bisphosphate + CO2 + H2O. It catalyses the reaction D-ribulose 1,5-bisphosphate + O2 = 2-phosphoglycolate + (2R)-3-phosphoglycerate + 2 H(+). Its function is as follows. RuBisCO catalyzes two reactions: the carboxylation of D-ribulose 1,5-bisphosphate, the primary event in carbon dioxide fixation, as well as the oxidative fragmentation of the pentose substrate in the photorespiration process. Both reactions occur simultaneously and in competition at the same active site. The sequence is that of Ribulose bisphosphate carboxylase large chain from Phuopsis stylosa (Caucasian crosswort).